The chain runs to 292 residues: Histamine N-methyltransferase (292 aa).

Residue glutamate 28 participates in substrate binding. Residues glycine 60, glutamate 89, glutamine 94, serine 120, and isoleucine 142 each contribute to the S-adenosyl-L-methionine site. Residue asparagine 283 participates in substrate binding.

The protein belongs to the class I-like SAM-binding methyltransferase superfamily. HNMT family. As to quaternary structure, monomer.

The protein resides in the cytoplasm. It catalyses the reaction histamine + S-adenosyl-L-methionine = N(tau)-methylhistamine + S-adenosyl-L-homocysteine + H(+). Inactivates histamine by N-methylation. Plays an important role in degrading histamine and in regulating the airway response to histamine. The sequence is that of Histamine N-methyltransferase (HNMT) from Pongo abelii (Sumatran orangutan).